The sequence spans 274 residues: Putative ankyrin repeat protein R597 (274 aa).

ANK repeat units follow at residues 78–112 (VGLPSLGYFTKNKDEFHNSLELMKLLLQYDMNNND), 114–144 (PISEYLYNAVKQNNFEKVKLLIDNGINSLKI), 146–174 (SRYHFENKYIYNNHEIVKYMIDNGVDIQG), and 176–205 (NLSYALHSCIISDNNDGVEYYFNIGANIND).

This Acanthamoeba polyphaga mimivirus (APMV) protein is Putative ankyrin repeat protein R597.